The following is a 173-amino-acid chain: Putative metal-dependent hydrolase BcerKBAB4_2443 (173 aa).

Zn(2+)-binding residues include His65, His156, and His160.

This sequence belongs to the metal hydrolase YfiT family. Homodimer. Requires Zn(2+) as cofactor.

It localises to the cytoplasm. Functionally, possible metal-dependent hydrolase. This Bacillus mycoides (strain KBAB4) (Bacillus weihenstephanensis) protein is Putative metal-dependent hydrolase BcerKBAB4_2443.